Reading from the N-terminus, the 201-residue chain is Kinetochore protein SPC24 homolog (201 aa).

The stretch at 78–133 forms a coiled coil; the sequence is DIAAEDEIERLQKELDEEMEREFKLKDELRLVADELKDLNAQLSSIDEHKQSTKRK.

It belongs to the SPC24 family. Component of the NDC80 complex, which consists of NDC80, NUF2, SPC24 and SPC25. Highly expressed in actively dividing tissues, such as shoot apical meristem (SAM), root apical meristem (RAM), vasculature, newly emerging leaves and inflorescence shoots.

The protein resides in the chromosome. Its subcellular location is the centromere. Its function is as follows. Acts as a component of the essential kinetochore-associated NDC80 complex, which is required for chromosome segregation and spindle checkpoint activity to ensure proper cell division. Required for the maintenance of plant architecture. The protein is Kinetochore protein SPC24 homolog of Arabidopsis thaliana (Mouse-ear cress).